Here is a 1226-residue protein sequence, read N- to C-terminus: Chromosome partition protein Smc (1226 aa).

Residue 32 to 39 (PNGCGKSN) participates in ATP binding. Coiled-coil stretches lie at residues 173 to 231 (ITKF…IKRN) and 269 to 491 (NSLE…SKSL). The region spanning 527–635 (YQLLGNLIQC…FDGYFIASKF (109 aa)) is the SMC hinge domain. Coiled-coil stretches lie at residues 679–741 (QGVV…AAKK), 775–965 (MLES…LREA), and 1006–1078 (HRRY…KSKE).

This sequence belongs to the SMC family. In terms of assembly, homodimer.

Its subcellular location is the cytoplasm. Functionally, required for chromosome condensation and partitioning. The chain is Chromosome partition protein Smc from Halobacteriovorax marinus (strain ATCC BAA-682 / DSM 15412 / SJ) (Bacteriovorax marinus).